The primary structure comprises 903 residues: MASVELEQQVDDLTVSKVTPFVEKNIDELNSLVQLMFTPSAPDIHCTQKLSKSQNTKLIQYKIRLEKTRSRILVLIDNYITHEEKLSHFLGLLDRIDDILTTIKIMSGEDEELNFTLPPTTNNNNNNTTNVLESSSDSDYDIIQPREFLKKSKPNLILSTKNSLSSLLKRKKSKNQITTTTTTTTTTANNNNTRRNRNNNNNNNNNANGANRTIDTSSEDDDESISSSDDDIVIGSRRSRAATISYLPNVPRANPTPINGRTPTPSHNFEPFTINTFLNSVNGVNKTSTTSTTTTTTTTTTAAGRTNKTVNRNNNNNNNNNNNKRFEIESEEESETDISSEEEENNNNNNNNSNNNNNSNNNNNLKLKTKSMSFTKNGIPLKIRSRINSESESEPENQLAESYELGKCQRKHISTPSLRLSSAHLPNTTTTTTTTTTTTTTTTSPKSVNNNDDDESSDSDSSDSEIENIKQTIKKNNGPPSPMTTEIIIGYSGHSKRLCNRYSLPTVQKSFTKQQLHEEIINFGRTPSRIKQSFLKPVNGDAELVFEYDDSEEEEEEEEEEEGEESDSESSSGSEGEVIVESFGIEKKVLRQYIKLKKEMEDRKKVSTKLEEPVECKICYMEYDQSNEVFTLECDHVYCFDCITEHLRILITEGRVLDISCPHPQCKKEIKESEIYMLTNEKNWLKYQKFSMIASLKTEPIKWCPTPDCDTPVRGGSERNPILNCPKCSNDFCWICGEYSHEGAKCGTEAMELQGRKNKSIESAATAYIDFLESNKHFVKPCPTCKSHIEKHDGCNHMTCINCQHQFCWLCMNPYQSGHYSSNEYPECFDRQYYSPFVPDTYTPPPPRRRHRKLKMAKKITLYTAAFTVGAPLLLIGGAVLLCVKIHKHRKNRARRNRNVGLY.

5 disordered regions span residues 115-137, 167-236, 284-366, 415-487, and 549-576; these read FTLP…SSSD, LLKR…VIGS, VNKT…NNLK, TPSL…TTEI, and DDSE…GSEG. Low complexity-rich tracts occupy residues 120–130 and 178–216; these read TTNNNNNNTTN and TTTT…TIDT. The segment covering 217-232 has biased composition (acidic residues); sequence SSEDDDESISSSDDDI. Low complexity-rich tracts occupy residues 287-301 and 311-323; these read TSTT…TTTT and NRNN…NNNN. Positions 313 to 352 form a coiled coil; the sequence is NNNNNNNNNNNKRFEIESEEESETDISSEEEENNNNNNNN. Over residues 329 to 345 the composition is skewed to acidic residues; sequence ESEEESETDISSEEEEN. Positions 346-364 are enriched in low complexity; it reads NNNNNNNSNNNNNSNNNNN. The span at 415 to 427 shows a compositional bias: polar residues; sequence TPSLRLSSAHLPN. The segment covering 428-443 has biased composition (low complexity); the sequence is TTTTTTTTTTTTTTTT. 2 stretches are compositionally biased toward acidic residues: residues 451–466 and 549–568; these read NDDD…DSEI and DDSE…ESDS. A coiled-coil region spans residues 542–569; the sequence is AELVFEYDDSEEEEEEEEEEEGEESDSE. The TRIAD supradomain stretch occupies residues 612–832; that stretch reads EPVECKICYM…NEYPECFDRQ (221 aa). Zn(2+) is bound by residues cysteine 616, cysteine 619, cysteine 634, histidine 636, cysteine 639, cysteine 642, cysteine 661, cysteine 666, cysteine 704, cysteine 709, cysteine 725, cysteine 728, cysteine 733, cysteine 736, histidine 741, cysteine 746, cysteine 782, and cysteine 785. An RING-type 1 zinc finger spans residues 616–666; that stretch reads CKICYMEYDQSNEVFTLECDHVYCFDCITEHLRILITEGRVLDISCPHPQC. An IBR-type zinc finger spans residues 683–746; the sequence is NWLKYQKFSM…GEYSHEGAKC (64 aa). The RING-type 2; atypical zinc finger occupies 782–811; the sequence is CPTCKSHIEKHDGCNHMTCINCQHQFCWLC. Residue cysteine 795 is part of the active site. Zn(2+)-binding residues include cysteine 800, cysteine 803, cysteine 808, cysteine 811, histidine 819, and cysteine 828. Residues 864-884 form a helical membrane-spanning segment; it reads TAAFTVGAPLLLIGGAVLLCV.

Belongs to the RBR family. RNF14 subfamily.

Its subcellular location is the membrane. The enzyme catalyses [E2 ubiquitin-conjugating enzyme]-S-ubiquitinyl-L-cysteine + [acceptor protein]-L-lysine = [E2 ubiquitin-conjugating enzyme]-L-cysteine + [acceptor protein]-N(6)-ubiquitinyl-L-lysine.. It participates in protein modification; protein ubiquitination. In terms of biological role, E3 ubiquitin-protein ligase. The protein is E3 ubiquitin-protein ligase DDB_G0292642 of Dictyostelium discoideum (Social amoeba).